The following is a 62-amino-acid chain: UPF0434 protein R03186 (62 aa).

This sequence belongs to the UPF0434 family.

In Rhizobium meliloti (strain 1021) (Ensifer meliloti), this protein is UPF0434 protein R03186.